Reading from the N-terminus, the 183-residue chain is Extracellular superoxide dismutase [Cu-Zn] (183 aa).

An N-terminal signal peptide occupies residues 1-32 (MTMLQQILLISVIIGTVHVHEVDCANEVLKAR). N-linked (GlcNAc...) asparagine glycosylation is present at N63. Cu cation is bound by residues H77, H79, and H94. A disulfide bond links C88 and C177. Zn(2+) contacts are provided by H94, H102, H111, and D114. Cu cation is bound at residue H151.

It belongs to the Cu-Zn superoxide dismutase family. The cofactor is Cu cation. Zn(2+) is required as a cofactor.

The protein resides in the secreted. The protein localises to the extracellular space. It catalyses the reaction 2 superoxide + 2 H(+) = H2O2 + O2. Functionally, destroys radicals which are normally produced within the cells and which are toxic to biological systems. This Haemonchus contortus (Barber pole worm) protein is Extracellular superoxide dismutase [Cu-Zn] (SOD).